A 207-amino-acid polypeptide reads, in one-letter code: FMN-dependent NADH:quinone oxidoreductase 2 (207 aa).

Residues Ser10, Ser16–Ser18, Met96–Leu99, and Ser141–Gly144 each bind FMN.

It belongs to the azoreductase type 1 family. In terms of assembly, homodimer. FMN is required as a cofactor.

It carries out the reaction 2 a quinone + NADH + H(+) = 2 a 1,4-benzosemiquinone + NAD(+). The catalysed reaction is N,N-dimethyl-1,4-phenylenediamine + anthranilate + 2 NAD(+) = 2-(4-dimethylaminophenyl)diazenylbenzoate + 2 NADH + 2 H(+). Quinone reductase that provides resistance to thiol-specific stress caused by electrophilic quinones. Its function is as follows. Also exhibits azoreductase activity. Catalyzes the reductive cleavage of the azo bond in aromatic azo compounds to the corresponding amines. The sequence is that of FMN-dependent NADH:quinone oxidoreductase 2 from Trichormus variabilis (strain ATCC 29413 / PCC 7937) (Anabaena variabilis).